We begin with the raw amino-acid sequence, 404 residues long: Tryptophan synthase beta chain (404 aa).

Residue Lys-94 is modified to N6-(pyridoxal phosphate)lysine.

This sequence belongs to the TrpB family. Tetramer of two alpha and two beta chains. It depends on pyridoxal 5'-phosphate as a cofactor.

It catalyses the reaction (1S,2R)-1-C-(indol-3-yl)glycerol 3-phosphate + L-serine = D-glyceraldehyde 3-phosphate + L-tryptophan + H2O. It functions in the pathway amino-acid biosynthesis; L-tryptophan biosynthesis; L-tryptophan from chorismate: step 5/5. In terms of biological role, the beta subunit is responsible for the synthesis of L-tryptophan from indole and L-serine. The sequence is that of Tryptophan synthase beta chain from Staphylococcus aureus (strain bovine RF122 / ET3-1).